The primary structure comprises 741 residues: Multifunctional procollagen lysine hydroxylase and glycosyltransferase LH3 (741 aa).

Positions 1–27 (MAASVPEPRLLLLLLLLLPPLPPVTSA) are cleaved as a signal peptide. Residues 28-293 (SDRPRGANPV…FCNLNRRTLP (266 aa)) are required for glycosyltransferase activity. 47-49 (VAT) is a binding site for UDP. Asparagine 66 carries N-linked (GlcNAc...) asparagine glycosylation. Aspartate 115, aspartate 118, and histidine 256 together coordinate Mn(2+). 115–117 (DSY) lines the UDP pocket. Residue 259 to 262 (GPTK) coordinates UDP. Intrachain disulfides connect cysteine 282/cysteine 285 and cysteine 382/cysteine 388. The tract at residues 298-523 (PPRVLLAVFV…EFGRLLSTSH (226 aa)) is accessory region. The N-linked (GlcNAc...) asparagine glycan is linked to asparagine 551. Cysteine 566 and cysteine 701 are disulfide-bonded. The 2-oxoglutarate site is built by arginine 602 and tyrosine 659. One can recognise a Fe2OG dioxygenase domain in the interval 650–741 (RAVMNFVVRY…RYIMVSFVDP (92 aa)). 2 residues coordinate Fe cation: histidine 670 and aspartate 672. The important for dimerization stretch occupies residues 675-718 (TFTLNVALNHKGVDYEGGGCRFLRYDCRVSSPRKGWALLHPGRL). Asparagine 679 is a 2-oxoglutarate binding site. Position 722 (histidine 722) interacts with Fe cation. Arginine 732 lines the 2-oxoglutarate pocket.

Homodimer. It depends on Fe(2+) as a cofactor. The cofactor is L-ascorbate. Mn(2+) serves as cofactor. In terms of tissue distribution, detected in heart and bone.

Its subcellular location is the rough endoplasmic reticulum. The protein localises to the endoplasmic reticulum lumen. It is found in the endoplasmic reticulum membrane. The protein resides in the secreted. It localises to the extracellular space. It catalyses the reaction L-lysyl-[collagen] + 2-oxoglutarate + O2 = (5R)-5-hydroxy-L-lysyl-[collagen] + succinate + CO2. The enzyme catalyses (5R)-5-hydroxy-L-lysyl-[collagen] + UDP-alpha-D-galactose = (5R)-5-O-(beta-D-galactosyl)-5-hydroxy-L-lysyl-[collagen] + UDP + H(+). It carries out the reaction (5R)-5-O-(beta-D-galactosyl)-5-hydroxy-L-lysyl-[collagen] + UDP-alpha-D-glucose = (5R)-5-O-[alpha-D-glucosyl-(1-&gt;2)-beta-D-galactosyl]-5-hydroxy-L-lysyl-[collagen] + UDP + H(+). Functionally, multifunctional enzyme that catalyzes a series of post-translational modifications on Lys residues in procollagen. Plays a redundant role in catalyzing the formation of hydroxylysine residues in -Xaa-Lys-Gly- sequences in collagens. Plays a redundant role in catalyzing the transfer of galactose onto hydroxylysine groups, giving rise to galactosyl 5-hydroxylysine. Has an essential role by catalyzing the subsequent transfer of glucose moieties, giving rise to 1,2-glucosylgalactosyl-5-hydroxylysine residues. Catalyzes hydroxylation and glycosylation of Lys residues in the MBL1 collagen-like domain, giving rise to hydroxylysine and 1,2-glucosylgalactosyl-5-hydroxylysine residues. Catalyzes hydroxylation and glycosylation of Lys residues in the ADIPOQ collagen-like domain, giving rise to hydroxylysine and 1,2-glucosylgalactosyl-5-hydroxylysine residues. Essential for normal biosynthesis and secretion of type IV collagens. Essential for normal formation of basement membranes. This Rattus norvegicus (Rat) protein is Multifunctional procollagen lysine hydroxylase and glycosyltransferase LH3 (Plod3).